The following is a 56-amino-acid chain: Large ribosomal subunit protein bL32 (56 aa).

Residues 1 to 19 (MAVPKRKKSRSTTRHRRAQ) show a composition bias toward basic residues. Residues 1 to 22 (MAVPKRKKSRSTTRHRRAQWKT) are disordered.

This sequence belongs to the bacterial ribosomal protein bL32 family.

In Cutibacterium acnes (strain DSM 16379 / KPA171202) (Propionibacterium acnes), this protein is Large ribosomal subunit protein bL32.